Consider the following 391-residue polypeptide: Inactive polyketide synthase 2 (391 aa).

The active site involves cysteine 164.

This sequence belongs to the thiolase-like superfamily. Chalcone/stilbene synthases family. In terms of assembly, homodimer.

This Rubus idaeus (Raspberry) protein is Inactive polyketide synthase 2 (PKS2).